The chain runs to 2097 residues: 1-phosphatidylinositol 3-phosphate 5-kinase (2097 aa).

The interval 1–44 (MATDDKSSPTLDSANDLPRSPASPSHLTHFKPLTPDQDEPPFKS) is disordered. Ala-2 carries the N-acetylalanine modification. Phosphoserine; by autocatalysis occurs at positions 23 and 48. The interval 56 to 122 (NKERGEGGQG…AEPACGGHDP (67 aa)) is disordered. Positions 66-81 (EQQSPSSSWASPQIPS) are enriched in low complexity. Ser-88 carries the phosphoserine modification. Residues 158-218 (DSQCKECYDC…ACTYCRKIAL (61 aa)) form an FYVE-type zinc finger. The Zn(2+) site is built by Cys-164, Cys-167, Cys-180, Cys-183, Cys-188, Cys-191, Cys-210, and Cys-213. Ser-299, Ser-307, and Ser-312 each carry phosphoserine. Ser-318 carries the phosphoserine; by PKB/AKT1 or PKB/AKT2 modification. The residue at position 329 (Ser-329) is a Phosphoserine. The DEP domain occupies 365–440 (HTSGMEFQDH…DEYALYRPLQ (76 aa)). The segment covering 442-459 (TEFSETPSPDSDSVNSVE) has biased composition (polar residues). The segment at 442–469 (TEFSETPSPDSDSVNSVEGHSEPSWFKD) is disordered. The span at 460-469 (GHSEPSWFKD) shows a compositional bias: basic and acidic residues. Phosphoserine is present on Ser-475. Residues 484–505 (GDDNLANSASPSKRTSVSSFQS) form a disordered region. Polar residues predominate over residues 488–505 (LANSASPSKRTSVSSFQS). The chaperonin-like domain stretch occupies residues 616 to 868 (MMALLQQLLQ…MICVAYHSQL (253 aa)). 4 disordered regions span residues 895-928 (GRGE…EDST), 989-1022 (AVGN…QDDT), 1171-1194 (HSKD…EERG), and 1511-1555 (FQQE…HNGE). Over residues 902–912 (SQEQVSGSSLP) the composition is skewed to polar residues. Positions 1175–1184 (ASCTSGGKSG) are enriched in polar residues. The segment covering 1185–1194 (NKTESDEERG) has biased composition (basic and acidic residues). Phosphoserine occurs at positions 1543 and 1548. Residue Ser-1668 is modified to Phosphoserine; by autocatalysis. The disordered stretch occupies residues 1697–1742 (EGLPANSALDNRPKSSSPIRLPEISGGQTNRTVEAEPQPTKKASGM). At Ser-1753 the chain carries Phosphoserine. One can recognise a PIPK domain in the interval 1757 to 2083 (SSQKRETLRG…RFCEAMDKYF (327 aa)). Residues 1781–1800 (GLESQGLEPQDEVDGGDTQK) are disordered. The segment at 1841 to 2097 (EEEFIRSLSH…DHWTGLDLNC (257 aa)) is catalytic. A phosphoserine; by autocatalysis mark is found at Ser-1968 and Ser-2052.

As to quaternary structure, component of the PI(3,5)P2 regulatory complex/PAS complex, at least composed of PIKFYVE, FIG4 and VAC14. VAC14 nucleates the assembly of the complex and serves as a scaffold by pentamerizing into a star-shaped structure, which can bind a single copy each of PIKFYVE and FIG4 and coordinates their activities. Interacts (via chaperonin-like domain) with RABEPK; the interaction recruits RABEPK to the endosomal membrane. Interacts with SPAG9. Interacts with EGFR. Mn(2+) is required as a cofactor. Post-translationally, phosphorylated in response to insulin at Ser-318 in a protein kinase B (PKB)-dependent manner. Autophosphorylates which down-regulates lipid product formation. In terms of processing, autophosphorylates which inhibits its own phosphatidylinositol 3-phosphate 5-kinase activity, stimulates FIG4 lipid phosphatase activity and down-regulates lipid product formation. Dephosphorylated by FIG4 in the PI(3,5)P2 regulatory complex, at Ser-48, Ser-1668 and Ser-2052. Phosphorylated in response to insulin at Ser-318 in a protein kinase B (PKB)-dependent manner. In terms of tissue distribution, ubiquitous.

It localises to the endosome membrane. The protein resides in the early endosome membrane. It is found in the cytoplasmic vesicle. Its subcellular location is the phagosome membrane. The protein localises to the late endosome membrane. It catalyses the reaction a 1,2-diacyl-sn-glycero-3-phospho-(1D-myo-inositol-3-phosphate) + ATP = a 1,2-diacyl-sn-glycero-3-phospho-(1D-myo-inositol-3,5-bisphosphate) + ADP + H(+). The catalysed reaction is a 1,2-diacyl-sn-glycero-3-phospho-(1D-myo-inositol) + ATP = a 1,2-diacyl-sn-glycero-3-phospho-(1D-myo-inositol-5-phosphate) + ADP + H(+). It carries out the reaction L-seryl-[protein] + ATP = O-phospho-L-seryl-[protein] + ADP + H(+). Its activity is regulated as follows. Inhibited by apilimod and YM201636. Functionally, dual specificity kinase implicated in myriad essential cellular processes such as maintenance of endomembrane homeostasis, and endocytic-vacuolar pathway, lysosomal trafficking, nuclear transport, stress- or hormone-induced signaling and cell cycle progression. The PI(3,5)P2 regulatory complex regulates both the synthesis and turnover of phosphatidylinositol 3,5-bisphosphate (PtdIns(3,5)P2). Sole enzyme to catalyze the phosphorylation of phosphatidylinositol 3-phosphate on the fifth hydroxyl of the myo-inositol ring, to form (PtdIns(3,5)P2). Also catalyzes the phosphorylation of phosphatidylinositol on the fifth hydroxyl of the myo-inositol ring, to form phosphatidylinositol 5-phosphate (PtdIns(5)P). Has serine-protein kinase activity and is able to autophosphorylate and transphosphorylate. Autophosphorylation inhibits its own phosphatidylinositol 3-phosphate 5-kinase activity, stimulates FIG4 lipid phosphatase activity and down-regulates lipid product formation. Involved in key endosome operations such as fission and fusion in the course of endosomal cargo transport. Required for the maturation of early into late endosomes, phagosomes and lysosomes. Regulates vacuole maturation and nutrient recovery following engulfment of macromolecules, initiates the redistribution of accumulated lysosomal contents back into the endosome network. Critical regulator of the morphology, degradative activity, and protein turnover of the endolysosomal system in macrophages and platelets. In neutrophils, critical to perform chemotaxis, generate ROS, and undertake phagosome fusion with lysosomes. Plays a key role in the processing and presentation of antigens by major histocompatibility complex class II (MHC class II) mediated by CTSS. Regulates melanosome biogenesis by controlling the delivery of proteins from the endosomal compartment to the melanosome. Essential for systemic glucose homeostasis, mediates insulin-induced signals for endosome/actin remodeling in the course of GLUT4 translocation/glucose uptake activation. Supports microtubule-based endosome-to-trans-Golgi network cargo transport, trhough association with SPAG9 and RABEPK. Mediates EGFR trafficking to the nucleus. The sequence is that of 1-phosphatidylinositol 3-phosphate 5-kinase from Mus musculus (Mouse).